The primary structure comprises 1030 residues: F-box/WD repeat-containing protein 10 (1030 aa).

Residues 280–329 (RDFIRDLPLHLSKYILRMLDKHSLNRCIFVSQHWATLAQQVKVDQSMHSF) form the F-box domain. WD repeat units follow at residues 466 to 505 (GHAG…CVRI), 508 to 547 (GHQG…KTFK), 549 to 584 (KDPI…LQKT), 587 to 624 (GHEG…ERCL), and 626 to 667 (AFKH…KVIK). The tract at residues 709–773 (KNKVKKSKDK…LSSDDMETPV (65 aa)) is disordered. Residues 716 to 733 (KDKEEEREETSLGDEHSR) are compositionally biased toward basic and acidic residues. The segment covering 734 to 749 (STIQGHSLKDSVSSKQ) has biased composition (polar residues). A coiled-coil region spans residues 963–992 (FMLMTVKEEKEFAEAKMKEYEASVSTKEVD).

Functionally, probable substrate-recognition component of a SCF (SKP1-CUL1-F-box protein)-type E3 ubiquitin ligase complex which mediates the ubiquitination and subsequent proteasomal degradation of target proteins. Overexpression is leading to degradation of CBX5 and CBX1. In Mus musculus (Mouse), this protein is F-box/WD repeat-containing protein 10 (Fbxw10).